The sequence spans 331 residues: Zinc finger CW-type PWWP domain protein 2 homolog (331 aa).

The segment at 9–64 adopts a CW-type zinc-finger fold; that stretch reads EFVHRTWVQCENESCLKWRLLSPAAAAAVNPSEPWYCFMNTDPSYSSCSVSEEDFP. Cys-18, Cys-23, Cys-45, and Cys-56 together coordinate Zn(2+). Positions 83 to 147 constitute a PWWP domain; sequence LGSLVLVKLR…AAFVGHFSLT (65 aa). The disordered stretch occupies residues 264-295; sequence IQEPTAREDESQGEQLSQCSPESPTGSPFQSY. A compositionally biased stretch (polar residues) spans 276–293; that stretch reads GEQLSQCSPESPTGSPFQ.

Functionally, histone methylation reader which binds to non-methylated (H3K4me0), monomethylated (H3K4me1), dimethylated (H3K4me2) and trimethylated (H3K4me3) 'Lys-4' on histone H3. The order of binding preference is H3K4me3 &gt; H3K4me2 &gt; H3K4me1 &gt; H3K4me0. This Mus musculus (Mouse) protein is Zinc finger CW-type PWWP domain protein 2 homolog (Zcwpw2).